Reading from the N-terminus, the 300-residue chain is Transcriptional dual regulator GltC (300 aa).

The region spanning Met1–Thr58 is the HTH lysR-type domain. The H-T-H motif DNA-binding region spans Val18 to Ala37.

It belongs to the LysR transcriptional regulatory family. Interacts with gutamate dehydrogenase RocG.

Activated by alpha-ketoglutarate and inhibited by glutamate and by RocG. Its function is as follows. Positive regulator of glutamate biosynthesis (gltAB genes). Negatively regulates its own expression. In Bacillus subtilis (strain 168), this protein is Transcriptional dual regulator GltC (gltC).